A 130-amino-acid polypeptide reads, in one-letter code: uncharacterized protein (130 aa).

This is an uncharacterized protein from Enterobacteria phage T4 (Bacteriophage T4).